We begin with the raw amino-acid sequence, 180 residues long: MILNDKTIRKYISEGLLEINPLDDIQIQPSSVDLRLGNEFLIYPEDIEIIDVRDPYFSNRLIKEIATEEGFIIKPKQFVLATTIEYIKLPDFLTAFVEGRSSLGRLGLFIENAGWVDAGFEGNITLEFYNANSIPIKIYPGMRICQLVFAKMEDRSEKPYRGKYQGQRGTTASRIFLDRD.

Residues 100-105 (RSSLGR), Asp-117, 125-127 (TLE), Gln-146, Tyr-160, and Gln-167 each bind dCTP. Glu-127 functions as the Proton donor/acceptor in the catalytic mechanism.

The protein belongs to the dCTP deaminase family. In terms of assembly, homotrimer.

The catalysed reaction is dCTP + 2 H2O = dUMP + NH4(+) + diphosphate. It participates in pyrimidine metabolism; dUMP biosynthesis; dUMP from dCTP: step 1/1. In terms of biological role, bifunctional enzyme that catalyzes both the deamination of dCTP to dUTP and the hydrolysis of dUTP to dUMP without releasing the toxic dUTP intermediate. This Sulfurihydrogenibium sp. (strain YO3AOP1) protein is dCTP deaminase, dUMP-forming.